The chain runs to 25 residues: LASP1 neighbor protein (25 aa).

A helical membrane pass occupies residues isoleucine 4–leucine 24.

Its subcellular location is the membrane. In terms of biological role, may play a key role in the skin fibroblasts (FBs)-keratinocyte-like cells (KLCs). The chain is LASP1 neighbor protein from Homo sapiens (Human).